The sequence spans 268 residues: Shikimate dehydrogenase (NADP(+)) (268 aa).

Threonine 62 serves as a coordination point for shikimate. The active-site Proton acceptor is the lysine 66. Glutamate 78 lines the NADP(+) pocket. 2 residues coordinate shikimate: asparagine 87 and aspartate 102. Residues 126–130 (GSGGI) and leucine 207 contribute to the NADP(+) site. Tyrosine 209 is a shikimate binding site. Position 230 (glycine 230) interacts with NADP(+).

Belongs to the shikimate dehydrogenase family. In terms of assembly, homodimer.

The catalysed reaction is shikimate + NADP(+) = 3-dehydroshikimate + NADPH + H(+). It functions in the pathway metabolic intermediate biosynthesis; chorismate biosynthesis; chorismate from D-erythrose 4-phosphate and phosphoenolpyruvate: step 4/7. Involved in the biosynthesis of the chorismate, which leads to the biosynthesis of aromatic amino acids. Catalyzes the reversible NADPH linked reduction of 3-dehydroshikimate (DHSA) to yield shikimate (SA). The polypeptide is Shikimate dehydrogenase (NADP(+)) (Thermoplasma acidophilum (strain ATCC 25905 / DSM 1728 / JCM 9062 / NBRC 15155 / AMRC-C165)).